The sequence spans 361 residues: MIPKEEIMGIFEKYNKDEITIATVGSHTSLHILKGAKLEGFSTAVITTKDRDVPYKRFGVADKFIYVDKFSDISSEEIQEQLREMNAIVVPHGSFIAYCGLDNVESTFKVPMFGNRAILRWEAERDLEGQLLGGSGLRLPKKYNSPDEIDGPVMVKFPGARGGRGYFPCSSTEEFWRKINDFKAKGVLSEEDVKKAHIEEYVVGANYCIHYFYSPLKDRVELMGIDRRYESSIDGLVRVPSKDQLELDIDPSYVITGNFPVVIRESLLPQVFDMGDKLCKKAEELVKPGMLGPFCLQSLCTENLELVVFEMSARSDGGNNTFMNGSPYSYLYNAEPLSMGQRIAKEIKLALELKMIEKVIS.

5-amino-1-(5-phospho-beta-D-ribosyl)imidazole-4-carboxamide-binding residues include His-27 and Ser-94. Residues 116-348 (RAILRWEAER…MGQRIAKEIK (233 aa)) enclose the ATP-grasp domain. ATP-binding positions include 146–208 (PDEI…ANYC) and Glu-230. Position 258 (Asn-258) interacts with 5-amino-1-(5-phospho-beta-D-ribosyl)imidazole-4-carboxamide. 2 residues coordinate Mg(2+): Gln-297 and Glu-310.

This sequence belongs to the phosphohexose mutase family. Requires Mg(2+) as cofactor. Mn(2+) is required as a cofactor.

It catalyses the reaction 5-amino-1-(5-phospho-beta-D-ribosyl)imidazole-4-carboxamide + formate + ATP = 5-formamido-1-(5-phospho-D-ribosyl)imidazole-4-carboxamide + ADP + phosphate. It functions in the pathway purine metabolism; IMP biosynthesis via de novo pathway; 5-formamido-1-(5-phospho-D-ribosyl)imidazole-4-carboxamide from 5-amino-1-(5-phospho-D-ribosyl)imidazole-4-carboxamide (formate route): step 1/1. Catalyzes the ATP- and formate-dependent formylation of 5-aminoimidazole-4-carboxamide-1-beta-d-ribofuranosyl 5'-monophosphate (AICAR) to 5-formaminoimidazole-4-carboxamide-1-beta-d-ribofuranosyl 5'-monophosphate (FAICAR) in the absence of folates. In Methanococcus vannielii (strain ATCC 35089 / DSM 1224 / JCM 13029 / OCM 148 / SB), this protein is 5-formaminoimidazole-4-carboxamide-1-(beta)-D-ribofuranosyl 5'-monophosphate synthetase.